Here is a 2108-residue protein sequence, read N- to C-terminus: Mucin-5B (2108 aa).

The first 21 residues, 1-21 (MEIKKERSFWIFCLIWSFCKG), serve as a signal peptide directing secretion. One can recognise a VWFD 1 domain in the interval 36-203 (SECTTWGNFH…KVEDPSEKCP (168 aa)). 2 disulfides stabilise this stretch: cysteine 38–cysteine 166 and cysteine 60–cysteine 202. Positions 196 to 219 (EDPSEKCPDVRPDDHTGRHPTEDD) are disordered. In terms of domain architecture, TIL 1 spans 304–360 (CPSNMEYMECGNSCADTCADPERSKICKAPCTDGCFCPPGTILDDLGGKKCVPRDSC). N-linked (GlcNAc...) (complex) asparagine glycosylation occurs at asparagine 381. The 173-residue stretch at 398-570 (GSCSIDGGFH…NSWKTRASCF (173 aa)) folds into the VWFD 2 domain. Disulfide bonds link cysteine 400-cysteine 534, cysteine 422-cysteine 569, and cysteine 443-cysteine 451. Residues asparagine 528, asparagine 599, asparagine 680, and asparagine 772 are each glycosylated (N-linked (GlcNAc...) (complex) asparagine). Positions 666 to 723 (CPETMVYNYSVKYCNQSCRSLDEPDPLCKVQIAPMEGCGCPEGTYLNDEEECVTPDDC) constitute a TIL 2 domain. A TIL 3 domain is found at 782–825 (GSECQKSCKTQDMHCYVTECVSGCMCPDGLVLDGSGGCIPKDQC). The VWFC 1 domain maps to 825 to 897 (CPCVHGGHFY…DYILAQDFCP (73 aa)). An N-linked (GlcNAc...) (complex) asparagine glycan is attached at asparagine 855. One can recognise a VWFD 3 domain in the interval 863–1033 (GTCTVYGNGH…NSWKITSTCS (171 aa)). Disulfide bonds link cysteine 865–cysteine 997, cysteine 887–cysteine 1032, cysteine 896–cysteine 994, and cysteine 914–cysteine 921. Asparagine 1036, asparagine 1219, asparagine 1371, and asparagine 1452 each carry an N-linked (GlcNAc...) (complex) asparagine glycan. The VWFD 4 domain maps to 1429–1613 (CICSGWGNEH…APVSTNRYCN (185 aa)). Intrachain disulfides connect cysteine 1431–cysteine 1573, cysteine 1453–cysteine 1612, and cysteine 1477–cysteine 1485. Residues asparagine 1567, asparagine 1639, asparagine 1792, asparagine 1807, and asparagine 1841 are each glycosylated (N-linked (GlcNAc...) (complex) asparagine). Residues 1761–1832 (CGCTAQDGSV…DPCCTETVCE (72 aa)) form the VWFC 2 domain. Residues 1870–1937 (GVCVSEGVEF…KEGQCCSQCQ (68 aa)) enclose the VWFC 3 domain. A glycan (N-linked (GlcNAc...) (complex) asparagine) is linked at asparagine 1964. 4 disulfide bridges follow: cysteine 2010-cysteine 2066, cysteine 2031-cysteine 2080, cysteine 2042-cysteine 2096, and cysteine 2046-cysteine 2098. Positions 2010 to 2104 (CIDLPHKCKR…ECGCVETKCP (95 aa)) constitute a CTCK domain.

As to quaternary structure, homomultimer; disulfide-linked. The N- and C-terminus mediate their assembly into higher order structures to form filaments. The CTCK domains of two polypeptides associate in the endoplasmic reticulum to generate intermolecularly disulfide-bonded dimers. These dimers progress to the Golgi apparatus, which is a more acidic environment than the endoplasmic reticulum. Under acidic conditions, the N-termini form non-covalent intermolecular interactions that juxtapose assemblies from different CTCK-linked dimers to produce long, disulfide-linked polymers that remain highly compact until secretion. Post-translationally, N-glycosylated. Complex glycosylation with bisecting N-acetylglucosamine. Contains mainly N-acetylglucosamine (3.1-8.5%), mannose (2.9-4.6%), a small amount of galactose (1.1-4.35) and sialic acid (0.3-1.3%). Most abundant glycan is composed of a GlcNAc(2)Man(3) core, a bisecting GlcNAc and another 3 GlcNAc antannae located on the mannoses of the core. Site Asn-1639 exists both in glycosylated and non-glycosylated forms.

It localises to the secreted. Functionally, ovomucin, the glycoprotein responsible for the gel properties of egg white, is composed for 2 subunits, alpha-ovomucin/MUC5B and beta-ovomucin/MUC6. In Gallus gallus (Chicken), this protein is Mucin-5B (MUC5B).